A 439-amino-acid chain; its full sequence is Serine hydroxymethyltransferase (439 aa).

(6S)-5,6,7,8-tetrahydrofolate is bound by residues leucine 134 and 138 to 140 (GHL). At lysine 243 the chain carries N6-(pyridoxal phosphate)lysine.

Belongs to the SHMT family. In terms of assembly, homodimer. Pyridoxal 5'-phosphate is required as a cofactor.

The protein resides in the cytoplasm. It catalyses the reaction (6R)-5,10-methylene-5,6,7,8-tetrahydrofolate + glycine + H2O = (6S)-5,6,7,8-tetrahydrofolate + L-serine. Its pathway is one-carbon metabolism; tetrahydrofolate interconversion. The protein operates within amino-acid biosynthesis; glycine biosynthesis; glycine from L-serine: step 1/1. In terms of biological role, catalyzes the reversible interconversion of serine and glycine with tetrahydrofolate (THF) serving as the one-carbon carrier. This reaction serves as the major source of one-carbon groups required for the biosynthesis of purines, thymidylate, methionine, and other important biomolecules. Also exhibits THF-independent aldolase activity toward beta-hydroxyamino acids, producing glycine and aldehydes, via a retro-aldol mechanism. This chain is Serine hydroxymethyltransferase, found in Brucella anthropi (strain ATCC 49188 / DSM 6882 / CCUG 24695 / JCM 21032 / LMG 3331 / NBRC 15819 / NCTC 12168 / Alc 37) (Ochrobactrum anthropi).